The primary structure comprises 202 residues: Small ribosomal subunit protein uS4 (202 aa).

Basic residues predominate over residues 1-13 (MSRYRGPRLRVTR). The segment at 1–42 (MSRYRGPRLRVTRRLGELPGLTRKASKKSNPPGQHGQARRKR) is disordered. In terms of domain architecture, S4 RNA-binding spans 90–152 (NRLDNVCFRL…KASKKLVEGN (63 aa)).

Belongs to the universal ribosomal protein uS4 family. Part of the 30S ribosomal subunit. Contacts protein S5. The interaction surface between S4 and S5 is involved in control of translational fidelity.

Its function is as follows. One of the primary rRNA binding proteins, it binds directly to 16S rRNA where it nucleates assembly of the body of the 30S subunit. With S5 and S12 plays an important role in translational accuracy. The sequence is that of Small ribosomal subunit protein uS4 from Prochlorococcus marinus subsp. pastoris (strain CCMP1986 / NIES-2087 / MED4).